The primary structure comprises 192 residues: Adenylate kinase (192 aa).

12 to 17 lines the ATP pocket; sequence GSGKTT. Residues 33–62 are NMP; that stretch reads STGDLLRAEVAKDSELGKKIDKIISGGNLV. Residues Thr34, Arg39, 60 to 62, 87 to 90, and Gln94 contribute to the AMP site; these read NLV and GYPR. Residues 129–135 form an LID region; it reads GRARGAD. Residue Arg130 participates in ATP binding. AMP is bound by residues Arg132 and Arg144. Arg172 serves as a coordination point for ATP.

This sequence belongs to the adenylate kinase family. In terms of assembly, monomer.

It is found in the cytoplasm. The catalysed reaction is AMP + ATP = 2 ADP. The protein operates within purine metabolism; AMP biosynthesis via salvage pathway; AMP from ADP: step 1/1. Catalyzes the reversible transfer of the terminal phosphate group between ATP and AMP. Plays an important role in cellular energy homeostasis and in adenine nucleotide metabolism. In Campylobacter hominis (strain ATCC BAA-381 / DSM 21671 / CCUG 45161 / LMG 19568 / NCTC 13146 / CH001A), this protein is Adenylate kinase.